The primary structure comprises 329 residues: Signal recognition particle receptor FtsY (329 aa).

Residues 127–134, 209–213, and 273–276 contribute to the GTP site; these read GVNGVGKT, DTAGR, and TKLD.

It belongs to the GTP-binding SRP family. FtsY subfamily. Part of the signal recognition particle protein translocation system, which is composed of SRP and FtsY.

The protein resides in the cell membrane. It localises to the cytoplasm. It carries out the reaction GTP + H2O = GDP + phosphate + H(+). In terms of biological role, involved in targeting and insertion of nascent membrane proteins into the cytoplasmic membrane. Acts as a receptor for the complex formed by the signal recognition particle (SRP) and the ribosome-nascent chain (RNC). The chain is Signal recognition particle receptor FtsY from Bacillus subtilis (strain 168).